Consider the following 414-residue polypeptide: Gamma-glutamyl phosphate reductase (414 aa).

It belongs to the gamma-glutamyl phosphate reductase family.

The protein resides in the cytoplasm. The catalysed reaction is L-glutamate 5-semialdehyde + phosphate + NADP(+) = L-glutamyl 5-phosphate + NADPH + H(+). Its pathway is amino-acid biosynthesis; L-proline biosynthesis; L-glutamate 5-semialdehyde from L-glutamate: step 2/2. Catalyzes the NADPH-dependent reduction of L-glutamate 5-phosphate into L-glutamate 5-semialdehyde and phosphate. The product spontaneously undergoes cyclization to form 1-pyrroline-5-carboxylate. This chain is Gamma-glutamyl phosphate reductase, found in Limosilactobacillus reuteri (strain DSM 20016) (Lactobacillus reuteri).